The sequence spans 338 residues: L-asparaginase 1 (338 aa).

One can recognise an Asparaginase/glutaminase domain in the interval 4 to 329; sequence KSIYVAYTGG…ETIRKAMSQN (326 aa). The active-site O-isoaspartyl threonine intermediate is the Thr-14. Substrate is bound by residues 59–61 and 91–92; these read DSS and TD.

This sequence belongs to the asparaginase 1 family. In terms of assembly, homotetramer.

It is found in the cytoplasm. It carries out the reaction L-asparagine + H2O = L-aspartate + NH4(+). The chain is L-asparaginase 1 (ansA) from Escherichia coli O157:H7.